The primary structure comprises 383 residues: Decapping nuclease RAI1 (383 aa).

Glutamate 166 lines the a divalent metal cation pocket. Glutamate 215 contributes to the substrate binding site. 3 residues coordinate a divalent metal cation: aspartate 217, glutamate 235, and leucine 236. Positions 237 and 261 each coordinate substrate.

This sequence belongs to the DXO/Dom3Z family. Interacts with RAT1; the interaction is direct, stabilizes RAT1 protein structure and stimulates its exoribonuclease activity. The interaction also stimulates RAI1 pyrophosphohydrolase activity, probably by recruiting it to mRNA substrates. It depends on a divalent metal cation as a cofactor.

Its subcellular location is the nucleus. It catalyses the reaction a 5'-end NAD(+)-phospho-ribonucleoside in mRNA + H2O = a 5'-end phospho-ribonucleoside in mRNA + NAD(+) + H(+). The enzyme catalyses a 5'-end (N(7)-methyl 5'-triphosphoguanosine)-ribonucleoside-ribonucleotide in mRNA + H2O = a (N(7)-methyl 5'-triphosphoguanosine)-nucleoside + a 5'-end phospho-ribonucleoside in mRNA + H(+). It carries out the reaction a 5'-end triphospho-ribonucleoside in mRNA + H2O = a 5'-end phospho-ribonucleoside in mRNA + diphosphate + H(+). Its function is as follows. Decapping enzyme for NAD-capped RNAs: specifically hydrolyzes the nicotinamide adenine dinucleotide (NAD) cap from a subset of RNAs by removing the entire NAD moiety from the 5'-end of an NAD-capped RNA. The NAD-cap is present at the 5'-end of some RNAs and snoRNAs. In contrast to the canonical 5'-end N7 methylguanosine (m7G) cap, the NAD cap promotes mRNA decay. Also acts as a non-canonical decapping enzyme that removes the entire cap structure of m7G capped or incompletely capped RNAs. Has decapping activity toward incomplete 5'-end m7G cap mRNAs such as unmethylated 5'-end-capped RNA (cap0), while it has no activity toward 2'-O-ribose methylated m7G cap (cap1). Also possesses RNA 5'-pyrophosphohydrolase activity by hydrolyzing the 5'-end triphosphate to release pyrophosphates. Stimulates exoribonuclease activity of Rat1, allowing it to degrade RNAs with stable secondary structure more effectively. This chain is Decapping nuclease RAI1, found in Lachancea thermotolerans (strain ATCC 56472 / CBS 6340 / NRRL Y-8284) (Yeast).